The following is a 272-amino-acid chain: MADS-box transcription factor 58 (272 aa).

The disordered stretch occupies residues 1 to 41; it reads MHIYKEQEAEPSTGLMMPEPAPVASPGSGGSGGSGSVGAEK. The segment covering 27 to 36 has biased composition (gly residues); it reads GSGGSGGSGS. The 61-residue stretch at 43–103 folds into the MADS-box domain; it reads GSRGKIEIKR…GRLYEYSNNS (61 aa). Positions 129 to 219 constitute a K-box domain; it reads AQHYQQEAAK…KSKVAESERG (91 aa).

Expressed in the lodicule, stamen carpel and ovule primordia.

It is found in the nucleus. Its function is as follows. Probable transcription factor involved in the development of floral organs. Acts as a C-class protein in association with MADS3. Involved in the control of lodicule number (whorl 2), stamen specification (whorl 3), floral meristem determinacy and regulation of the carpel morphogenesis (whorl 4). Plays a more predominant role in floral meristem determinacy than MADS3. In Oryza sativa subsp. japonica (Rice), this protein is MADS-box transcription factor 58 (MADS58).